The following is a 174-amino-acid chain: Serine protease 2 (174 aa).

A disulfide bond links C15 and C36. Active-site charge relay system residues include H35, D65, and S147. An intrachain disulfide couples C141 to C168.

Belongs to the peptidase S1 family.

Its subcellular location is the secreted. Its function is as follows. Broad substrate specificity. This Streptomyces fradiae (Streptomyces roseoflavus) protein is Serine protease 2.